We begin with the raw amino-acid sequence, 269 residues long: Formamidopyrimidine-DNA glycosylase (269 aa).

The Schiff-base intermediate with DNA role is filled by P2. E3 acts as the Proton donor in catalysis. The active-site Proton donor; for beta-elimination activity is K57. DNA-binding residues include H90, R109, and K150. Residues Q235–K269 form an FPG-type zinc finger. R259 functions as the Proton donor; for delta-elimination activity in the catalytic mechanism.

This sequence belongs to the FPG family. Monomer. Requires Zn(2+) as cofactor.

The enzyme catalyses Hydrolysis of DNA containing ring-opened 7-methylguanine residues, releasing 2,6-diamino-4-hydroxy-5-(N-methyl)formamidopyrimidine.. The catalysed reaction is 2'-deoxyribonucleotide-(2'-deoxyribose 5'-phosphate)-2'-deoxyribonucleotide-DNA = a 3'-end 2'-deoxyribonucleotide-(2,3-dehydro-2,3-deoxyribose 5'-phosphate)-DNA + a 5'-end 5'-phospho-2'-deoxyribonucleoside-DNA + H(+). Its function is as follows. Involved in base excision repair of DNA damaged by oxidation or by mutagenic agents. Acts as a DNA glycosylase that recognizes and removes damaged bases. Has a preference for oxidized purines, such as 7,8-dihydro-8-oxoguanine (8-oxoG). Has AP (apurinic/apyrimidinic) lyase activity and introduces nicks in the DNA strand. Cleaves the DNA backbone by beta-delta elimination to generate a single-strand break at the site of the removed base with both 3'- and 5'-phosphates. The polypeptide is Formamidopyrimidine-DNA glycosylase (Enterobacter sp. (strain 638)).